The chain runs to 143 residues: Large ribosomal subunit protein uL11 (143 aa).

This sequence belongs to the universal ribosomal protein uL11 family. As to quaternary structure, part of the ribosomal stalk of the 50S ribosomal subunit. Interacts with L10 and the large rRNA to form the base of the stalk. L10 forms an elongated spine to which L12 dimers bind in a sequential fashion forming a multimeric L10(L12)X complex. One or more lysine residues are methylated.

Forms part of the ribosomal stalk which helps the ribosome interact with GTP-bound translation factors. In Teredinibacter turnerae (strain ATCC 39867 / T7901), this protein is Large ribosomal subunit protein uL11.